Here is a 252-residue protein sequence, read N- to C-terminus: Type II secretion system protein N (252 aa).

Residues 1-4 lie on the Cytoplasmic side of the membrane; that stretch reads MKQK. A helical membrane pass occupies residues 5-25; that stretch reads VLIAALFLVAYLGFLLVKLPA. The Periplasmic portion of the chain corresponds to 26-252; the sequence is TLVVRHLPLP…RFPLRYQGRI (227 aa).

It belongs to the GSP N family.

The protein resides in the cell inner membrane. Involved in a type II secretion system (T2SS, formerly general secretion pathway, GSP) for the export of proteins. The polypeptide is Type II secretion system protein N (exeN) (Aeromonas hydrophila).